A 167-amino-acid chain; its full sequence is 2-C-methyl-D-erythritol 2,4-cyclodiphosphate synthase (167 aa).

The a divalent metal cation site is built by D10 and H12. 4-CDP-2-C-methyl-D-erythritol 2-phosphate contacts are provided by residues 10–12 (DVH) and 36–37 (HS). H44 is a binding site for a divalent metal cation. Residues 58 to 60 (NIG), 63 to 67 (FPNTN), 134 to 137 (TTSE), F141, and R144 each bind 4-CDP-2-C-methyl-D-erythritol 2-phosphate.

The protein belongs to the IspF family. As to quaternary structure, homotrimer. A divalent metal cation serves as cofactor.

It carries out the reaction 4-CDP-2-C-methyl-D-erythritol 2-phosphate = 2-C-methyl-D-erythritol 2,4-cyclic diphosphate + CMP. The protein operates within isoprenoid biosynthesis; isopentenyl diphosphate biosynthesis via DXP pathway; isopentenyl diphosphate from 1-deoxy-D-xylulose 5-phosphate: step 4/6. In terms of biological role, involved in the biosynthesis of isopentenyl diphosphate (IPP) and dimethylallyl diphosphate (DMAPP), two major building blocks of isoprenoid compounds. Catalyzes the conversion of 4-diphosphocytidyl-2-C-methyl-D-erythritol 2-phosphate (CDP-ME2P) to 2-C-methyl-D-erythritol 2,4-cyclodiphosphate (ME-CPP) with a corresponding release of cytidine 5-monophosphate (CMP). The protein is 2-C-methyl-D-erythritol 2,4-cyclodiphosphate synthase of Azobacteroides pseudotrichonymphae genomovar. CFP2.